We begin with the raw amino-acid sequence, 464 residues long: Transcription factor EAT1 (464 aa).

The basic motif; degenerate stretch occupies residues 261-274 (GKGKANFATERERR). The bHLH domain maps to 261-310 (GKGKANFATERERREQLNVKFRTLRMLFPNPTKNDRASIVGDAIEYIDEL). The segment at 275–310 (EQLNVKFRTLRMLFPNPTKNDRASIVGDAIEYIDEL) is helix-loop-helix motif. Positions 338–357 (QEAAADGESSSMRPVRDDQD) are disordered.

This sequence belongs to the bHLH protein family. In terms of assembly, interacts with TDR.

Its subcellular location is the nucleus. Its function is as follows. Transcription factor involved in the regulation of tapetum programmed cell death (PCD) and degradation during male reproductive development. Interacts with TDR and promote tapetal PCD by regulating the expression of RTS, and the two lipid-transfer proteins C4 and C6, which function in microspore development. Acts downstream from and interacts with TDR in the regulation of tapetal PCD. Regulates directly the aspartic protease AP25 and AP37 during tapetal PCD. May not target the cysteine protease CP1. This is Transcription factor EAT1 from Oryza sativa subsp. japonica (Rice).